We begin with the raw amino-acid sequence, 593 residues long: Glutamate decarboxylase 1 (593 aa).

Positions M1–S12 are enriched in low complexity. The segment at M1 to N22 is disordered. A Phosphoserine modification is found at S77. 4-aminobutanoate is bound at residue Q189–S191. An N6-(pyridoxal phosphate)lysine modification is found at K404. R566 is a binding site for 4-aminobutanoate.

This sequence belongs to the group II decarboxylase family. In terms of assembly, homodimer. Pyridoxal 5'-phosphate is required as a cofactor.

The catalysed reaction is L-glutamate + H(+) = 4-aminobutanoate + CO2. Functionally, catalyzes the synthesis of the inhibitory neurotransmitter gamma-aminobutyric acid (GABA) with pyridoxal 5'-phosphate as cofactor. The chain is Glutamate decarboxylase 1 (Gad1) from Mus musculus (Mouse).